We begin with the raw amino-acid sequence, 194 residues long: Fimbrial protein 987P (194 aa).

The N-terminal stretch at 1-23 is a signal peptide; that stretch reads MRMKKSALTLAVLSSLFSGYSLA. A disulfide bond links cysteine 46 and cysteine 85.

The protein belongs to the fimbrial protein family.

Its subcellular location is the fimbrium. This is Fimbrial protein 987P (fasA) from Escherichia coli.